The sequence spans 304 residues: Cell surface-binding protein OPG105 (304 aa).

In terms of domain architecture, Alpha-carbonic anhydrase spans methionine 1–glycine 235. At methionine 1–threonine 275 the chain is on the virion surface side. Residues phenylalanine 276–methionine 294 form a helical membrane-spanning segment. The Intravirion segment spans residues serine 295–asparagine 304.

This sequence belongs to the alpha-carbonic anhydrase family. As to quaternary structure, homodimer; disulfide-linked. In terms of processing, apparently non-glycosylated.

It localises to the virion membrane. In terms of biological role, binds to chondroitin sulfate on the cell surface to provide virion attachment to target cell. The polypeptide is Cell surface-binding protein OPG105 (OPG105) (Bos taurus (Bovine)).